Reading from the N-terminus, the 1242-residue chain is MEPLRPQITYGPIETVDNEELTEADMLSFISAAVNSTGLIGYNIKSFDDLMDNGIPQIVKQMFNVDITYKDQRDHTEIDKLRESVQIQFNFTDVNIERPQHRNYSQGNKINLLPNKARLCGLSYSGPVNLAAEVILTAHYSNGRQEVKRASIPPFQVSTFPIMRGSNRCHTHHLSKTAKKEIGEDPNEPGGYFIARGGEWVVDLLENIRFNTLHIHYHTMQQGNNEIIRGEFISQPGGAFENSSQIIIRYMTTGAITIEINSTKFSKLRIPWYLIFRMFGMTGDDSIIEQVVFDLESNSLVNTFMIEILEKSIHVLDPIFQPVQHELNREKIIQFLSEKVSKFVSNPSAYKSDENAVQYLNERQLTILDKILLPHMGQTADTRVRKLRFLGLLIHKILLVIMNVFPPTDRDSYRTKRVHGSGVSLAKAFKAIFNTSVIAPIINGFKELLKQTAFEELTQRNIIEAFSAALSKNTASDLNRSMEQSIISGNKTIMVRQRPIVNRVSTQSLERKNLLNTISALRTVNTHNTTNASKQTERADMMRRVHASYPGYICVAQSADTGEKVGMSKQLAITANVCTAGEVLSLKQRLLSDPAIQQLADVSNKDIVRKGLARVFINGEWIGCCTNAFELAQRYRMLRREGKIVHPHTTIYWDSMVDEVEFWLDVGRLTRPLLIVDNNIEKYNQACYKAAEARKKGDKDWEKHKIPFVQNTRFTSQMAKDILAGTLTLEDLVAQGICEFITPEEAENCLVAFSIIELRKHKHDVTRRFTHVDVPQAILGLAALVSPYANCTQPARVTYETNQGRQTGGWYCFSWPYRVDMNRFFQFYNEMPLVKTIAHNYVIPNGLNTIVAYMIYGGYNQEDSVIVSQSFIDRGGFAGTFYREEKVELESDIESFGKPDPLITKNLKPGANYEKLVDGFVPVGTVVKKGDIIIGKVAKIRGEKDELNKYIDRSVMYGFDEPAVVDAVMRPHGPNDEIFGLMRLRYERNLNIGDKMSSRSGNKGIAALALPTSDMPFTEDGLQPDLIVNPHSHPSRMTNGQMIETTVGLANALQGVVTDGTAFLPINVQLLSERLAQEGLRFNGCQKMFNGQTGEYFDAAIFIGPTYHQRLQKFVLDDRYAVASYGPTDALTGQPLDGKRSHGGLRLGEMEHWVLTAQGAMQTIIEKSHDDSDGCISYVCRNCGEPAIYNASHPIYKCMNCDVQADIGMVDSRRSSIVFQHEMRAANVNITSVLSPRVFQPA.

A C4-type zinc finger spans residues 1180–1201 (CRNCGEPAIYNASHPIYKCMNC).

Belongs to the RNA polymerase beta chain family. As to quaternary structure, part of the viral DNA-directed RNA polymerase that consists of 8 polII-like subunits (RPB1, RPB2, RPB3, RPB5, RPB6, RPB7, RPB9, RPB10), a capping enzyme and a termination factor.

The protein resides in the host cytoplasm. It is found in the virion. The catalysed reaction is RNA(n) + a ribonucleoside 5'-triphosphate = RNA(n+1) + diphosphate. In terms of biological role, catalytic component of the DNA-directed RNA polymerase (RNAP) that catalyzes the transcription in the cytoplasm of viral DNA into RNA using the four ribonucleoside triphosphates as substrates. Forms the polymerase active center together with RPB1. Part of the core element with the central large cleft, the clamp element that moves to open and close the cleft and the jaws that are thought to grab the incoming DNA template. This Ornithodoros (relapsing fever ticks) protein is DNA-directed RNA polymerase RPB2 homolog.